The chain runs to 581 residues: 2-isopropylmalate synthase (581 aa).

Residues 32–306 (PQWCAVDLRD…DPQLDFSDIK (275 aa)) enclose the Pyruvate carboxyltransferase domain. Positions 41, 245, 247, and 281 each coordinate Mg(2+). Residues 455–581 (RSAPVEQIAL…KHQQLQNGGV (127 aa)) form a regulatory domain region.

Belongs to the alpha-IPM synthase/homocitrate synthase family. LeuA type 2 subfamily. In terms of assembly, homodimer. Requires Mg(2+) as cofactor.

The protein resides in the cytoplasm. It carries out the reaction 3-methyl-2-oxobutanoate + acetyl-CoA + H2O = (2S)-2-isopropylmalate + CoA + H(+). It participates in amino-acid biosynthesis; L-leucine biosynthesis; L-leucine from 3-methyl-2-oxobutanoate: step 1/4. Its function is as follows. Catalyzes the condensation of the acetyl group of acetyl-CoA with 3-methyl-2-oxobutanoate (2-ketoisovalerate) to form 3-carboxy-3-hydroxy-4-methylpentanoate (2-isopropylmalate). This chain is 2-isopropylmalate synthase, found in Corynebacterium efficiens (strain DSM 44549 / YS-314 / AJ 12310 / JCM 11189 / NBRC 100395).